A 1056-amino-acid polypeptide reads, in one-letter code: Kinesin-like protein KIN-5A (1056 aa).

The tract at residues 1 to 44 (MDRRIGLTSPSPKSTEKSGRDLRSGGDANGGANTNSNSIPRGDK) is disordered. The segment covering 14–24 (STEKSGRDLRS) has biased composition (basic and acidic residues). Residues 49–395 (NVQVILRCRP…LDYAHRAKNI (347 aa)) enclose the Kinesin motor domain. 135 to 142 (GQTGTGKT) lines the ATP pocket. Residues 443–525 (QEEAEKKAMT…STIKEKEYVI (83 aa)) are a coiled coil.

The protein belongs to the TRAFAC class myosin-kinesin ATPase superfamily. Kinesin family. KIN-5/BimC subfamily.

The protein localises to the cytoplasm. The protein resides in the cytoskeleton. Its subcellular location is the spindle. In terms of biological role, responsible for microtubule translocation. May be important for the organization of phragmoplast-specific arrays of microtubules. Plays an essential role in stabilizing the mitotic spindle. Required during mitotic cytokinesis. The protein is Kinesin-like protein KIN-5A of Oryza sativa subsp. japonica (Rice).